The sequence spans 102 residues: Small ribosomal subunit protein uS10 (102 aa).

This sequence belongs to the universal ribosomal protein uS10 family. Part of the 30S ribosomal subunit.

Functionally, involved in the binding of tRNA to the ribosomes. The chain is Small ribosomal subunit protein uS10 from Chloroflexus aurantiacus (strain ATCC 29366 / DSM 635 / J-10-fl).